We begin with the raw amino-acid sequence, 585 residues long: Glutamine--tRNA ligase (585 aa).

Residues 51–61 (PEPNGYLHIGH) carry the 'HIGH' region motif. ATP is bound by residues 52–54 (EPN) and 58–64 (HIGHAKS). L-glutamine-binding residues include Asp84 and Tyr238. ATP is bound by residues Thr257 and 292 to 293 (RL). The 'KMSKS' region motif lies at 299–303 (ITSKR).

It belongs to the class-I aminoacyl-tRNA synthetase family. Monomer.

The protein localises to the cytoplasm. The enzyme catalyses tRNA(Gln) + L-glutamine + ATP = L-glutaminyl-tRNA(Gln) + AMP + diphosphate. This is Glutamine--tRNA ligase from Cupriavidus taiwanensis (strain DSM 17343 / BCRC 17206 / CCUG 44338 / CIP 107171 / LMG 19424 / R1) (Ralstonia taiwanensis (strain LMG 19424)).